A 367-amino-acid polypeptide reads, in one-letter code: GTP cyclohydrolase FolE2 (367 aa).

This sequence belongs to the GTP cyclohydrolase IV family.

The enzyme catalyses GTP + H2O = 7,8-dihydroneopterin 3'-triphosphate + formate + H(+). Its pathway is cofactor biosynthesis; 7,8-dihydroneopterin triphosphate biosynthesis; 7,8-dihydroneopterin triphosphate from GTP: step 1/1. Its function is as follows. Converts GTP to 7,8-dihydroneopterin triphosphate. The chain is GTP cyclohydrolase FolE2 from Ruegeria sp. (strain TM1040) (Silicibacter sp.).